Consider the following 94-residue polypeptide: U1-theraphotoxin-Sp1a (94 aa).

An N-terminal signal peptide occupies residues 1–22; it reads MIFLLPSIISVMLLAEPVLMLG. Positions 23-58 are excised as a propeptide; sequence DTEDADLMEMVQLSRPFFNPIIRAVELVELREERQR. Cystine bridges form between C60–C78, C67–C83, and C77–C88. Position 92 is a valine amide (V92).

It belongs to the neurotoxin 14 (magi-1) family. OAIP-1 subfamily. In terms of tissue distribution, expressed by the venom gland.

It is found in the secreted. In terms of biological role, probable ion channel inhibitor. Shows insecticidal activity. Acts synergistically with the neonicotinoid insecticide imidacloprid. Is neither a repellent that repels insects nor an attractant that is preferentially consumed by insects. Is very stable. The sequence is that of U1-theraphotoxin-Sp1a from Selenotypus plumipes (Australian featherleg tarantula).